The primary structure comprises 546 residues: CTP synthase (546 aa).

Positions 1-269 (MADTKYIFVT…DKVTLKKLAL (269 aa)) are amidoligase domain. A CTP-binding site is contributed by serine 15. Serine 15 provides a ligand contact to UTP. Residue 16-21 (SLGKGI) participates in ATP binding. Tyrosine 56 is an L-glutamine binding site. ATP is bound at residue aspartate 73. Mg(2+) contacts are provided by aspartate 73 and glutamate 143. CTP contacts are provided by residues 150–152 (DIE), 190–195 (KTKPTQ), and lysine 226. UTP contacts are provided by residues 190 to 195 (KTKPTQ) and lysine 226. Residues 295–537 (HIGLIGKYVE…VKAAHEHSVK (243 aa)) form the Glutamine amidotransferase type-1 domain. Glycine 357 is an L-glutamine binding site. The active-site Nucleophile; for glutamine hydrolysis is the cysteine 384. L-glutamine contacts are provided by residues 385-388 (LGMQ), glutamate 408, and arginine 465. Catalysis depends on residues histidine 510 and glutamate 512.

It belongs to the CTP synthase family. As to quaternary structure, homotetramer.

The enzyme catalyses UTP + L-glutamine + ATP + H2O = CTP + L-glutamate + ADP + phosphate + 2 H(+). It carries out the reaction L-glutamine + H2O = L-glutamate + NH4(+). The catalysed reaction is UTP + NH4(+) + ATP = CTP + ADP + phosphate + 2 H(+). It functions in the pathway pyrimidine metabolism; CTP biosynthesis via de novo pathway; CTP from UDP: step 2/2. Its activity is regulated as follows. Allosterically activated by GTP, when glutamine is the substrate; GTP has no effect on the reaction when ammonia is the substrate. The allosteric effector GTP functions by stabilizing the protein conformation that binds the tetrahedral intermediate(s) formed during glutamine hydrolysis. Inhibited by the product CTP, via allosteric rather than competitive inhibition. Catalyzes the ATP-dependent amination of UTP to CTP with either L-glutamine or ammonia as the source of nitrogen. Regulates intracellular CTP levels through interactions with the four ribonucleotide triphosphates. The sequence is that of CTP synthase from Christiangramia forsetii (strain DSM 17595 / CGMCC 1.15422 / KT0803) (Gramella forsetii).